The sequence spans 60 residues: Large ribosomal subunit protein bL32 (60 aa).

Basic residues predominate over residues 1-16 (MAVPRRKTSPSRRGMR). The segment at 1-60 (MAVPRRKTSPSRRGMRRSADAIKKPTYVEDKDSGELRRPHHLDLKTGMYKGRQVLKKKES) is disordered. Residues 17–44 (RSADAIKKPTYVEDKDSGELRRPHHLDL) are compositionally biased toward basic and acidic residues.

Belongs to the bacterial ribosomal protein bL32 family.

This chain is Large ribosomal subunit protein bL32, found in Bradyrhizobium diazoefficiens (strain JCM 10833 / BCRC 13528 / IAM 13628 / NBRC 14792 / USDA 110).